The following is a 406-amino-acid chain: CinA-like protein (406 aa).

This sequence belongs to the CinA family.

The sequence is that of CinA-like protein from Deinococcus geothermalis (strain DSM 11300 / CIP 105573 / AG-3a).